The primary structure comprises 339 residues: Glucokinase (339 aa).

Residue 16 to 21 coordinates ATP; it reads GDIGGT.

Belongs to the bacterial glucokinase family.

The protein resides in the cytoplasm. It carries out the reaction D-glucose + ATP = D-glucose 6-phosphate + ADP + H(+). This Rhizobium meliloti (strain 1021) (Ensifer meliloti) protein is Glucokinase.